The sequence spans 416 residues: Gamma-glutamyl phosphate reductase (416 aa).

It belongs to the gamma-glutamyl phosphate reductase family.

It localises to the cytoplasm. The catalysed reaction is L-glutamate 5-semialdehyde + phosphate + NADP(+) = L-glutamyl 5-phosphate + NADPH + H(+). The protein operates within amino-acid biosynthesis; L-proline biosynthesis; L-glutamate 5-semialdehyde from L-glutamate: step 2/2. Catalyzes the NADPH-dependent reduction of L-glutamate 5-phosphate into L-glutamate 5-semialdehyde and phosphate. The product spontaneously undergoes cyclization to form 1-pyrroline-5-carboxylate. The polypeptide is Gamma-glutamyl phosphate reductase (Streptococcus mutans serotype c (strain ATCC 700610 / UA159)).